Reading from the N-terminus, the 167-residue chain is Modulator of smoothened protein (167 aa).

Transmembrane regions (helical) follow at residues 7 to 29 (ISGCLFLAADIFAIASIANPDWI), 68 to 88 (TLFFIILGIVSLTITCGLLVI), 101 to 121 (WIAFMGMVLFCMAALIFPVGF), and 139 to 159 (VGSSYVLFVLSIFFTIVGLLF).

The protein resides in the cell projection. The protein localises to the cilium membrane. It localises to the cell membrane. Its function is as follows. Acts as a negative regulator of hedgehog signaling probably by promoting internalization and subsequent degradation of smoothened protein (SMO) present in the ciliary membrane. Plays a role in sonic hedgehog (SHH)-induced spinal neural progenitor cells differentiation. The polypeptide is Modulator of smoothened protein (Danio rerio (Zebrafish)).